The following is a 380-amino-acid chain: Cytochrome b (380 aa).

Helical transmembrane passes span Phe33–Met53, Trp77–Ile98, Trp113–Leu133, and Phe178–Leu198. Heme b-binding residues include His83 and His97. Positions 182 and 196 each coordinate heme b. His201 contacts a ubiquinone. The next 4 helical transmembrane spans lie at Tyr226–Ala246, Leu288–His308, Leu320–Gly340, and Phe347–Pro367.

The protein belongs to the cytochrome b family. The cytochrome bc1 complex contains 3 respiratory subunits (MT-CYB, CYC1 and UQCRFS1), 2 core proteins (UQCRC1 and UQCRC2) and probably 6 low-molecular weight proteins. The cofactor is heme b.

The protein localises to the mitochondrion inner membrane. Functionally, component of the ubiquinol-cytochrome c reductase complex (complex III or cytochrome b-c1 complex) that is part of the mitochondrial respiratory chain. The b-c1 complex mediates electron transfer from ubiquinol to cytochrome c. Contributes to the generation of a proton gradient across the mitochondrial membrane that is then used for ATP synthesis. This is Cytochrome b (mt-cyb) from Oncorhynchus keta (Chum salmon).